The sequence spans 600 residues: Calcium/calmodulin-dependent serine/threonine-protein kinase 1 (600 aa).

A disordered region spans residues 1 to 99; the sequence is MGLCHGKSAA…GGFKRPFPPP (99 aa). Positions 24–56 are enriched in low complexity; that stretch reads TRVAEAAAAPAKPASPAPSAAAAAAAPAKPGTP. A compositionally biased stretch (polar residues) spans 74–85; that stretch reads YKGSPANSSVAS. The Protein kinase domain maps to 147 to 409; it reads YELGREVGRG…AAQALCHPWI (263 aa). ATP is bound by residues 153–161 and Lys-179; that span reads VGRGHFGYT. The active-site Proton acceptor is the Asp-275.

It belongs to the protein kinase superfamily. Ser/Thr protein kinase family. In terms of processing, autophosphorylated. As to expression, highly expressed in roots in the zone of cell division. Expressed in leaf mesophyll cells and at lower levels in mature stems.

It carries out the reaction L-seryl-[protein] + ATP = O-phospho-L-seryl-[protein] + ADP + H(+). The enzyme catalyses L-threonyl-[protein] + ATP = O-phospho-L-threonyl-[protein] + ADP + H(+). Its activity is regulated as follows. Activated by the binding of calmodulin-like protein 1 (CML1) in the presence of Ca(2+). In terms of biological role, possesses kinase activity in vitro. The polypeptide is Calcium/calmodulin-dependent serine/threonine-protein kinase 1 (CAMK1) (Oryza sativa subsp. japonica (Rice)).